The chain runs to 185 residues: Ribosome-recycling factor (185 aa).

This sequence belongs to the RRF family.

It localises to the cytoplasm. Its function is as follows. Responsible for the release of ribosomes from messenger RNA at the termination of protein biosynthesis. May increase the efficiency of translation by recycling ribosomes from one round of translation to another. The protein is Ribosome-recycling factor of Thermobifida fusca (strain YX).